A 1154-amino-acid chain; its full sequence is Large proline-rich protein BAG6 (1154 aa).

The residue at position 1 (Met-1) is an N-acetylmethionine. One can recognise a Ubiquitin-like domain in the interval 17–92 (LEVLVKTLDS…HLVERAPPQT (76 aa)). Disordered stretches follow at residues 87–125 (RAPP…ASVH), 186–274 (RGGT…HPSP), 387–442 (TMTG…SSHP), 463–531 (QDSG…QGAG), and 568–626 (AQAQ…SAAD). Ser-96 carries the phosphoserine modification. The segment covering 96–112 (SGASSGTGSASATHGGA) has biased composition (low complexity). Position 117 is a phosphothreonine (Thr-117). A compositionally biased stretch (polar residues) spans 209 to 218 (VALNSQTSEP). The stretch at 237–271 (RPPTQTPELAPSGPAPAGPAPAGPAPAPETNAPNH) is repeat 1. Residues 237 to 658 (RPPTQTPELA…MASPTITVAM (422 aa)) are 4 X 29 AA approximate repeats. Residues 249–263 (GPAPAGPAPAGPAPA) are compositionally biased toward pro residues. Low complexity predominate over residues 400-409 (GAEAATPGSA). Positions 410-426 (QATSLPPSSTTVDSSTE) are enriched in polar residues. The stretch at 416–444 (PSSTTVDSSTEGAPPPGPAPPPASSHPRV) is repeat 2. 2 stretches are compositionally biased toward pro residues: residues 428 to 439 (APPPGPAPPPAS) and 508 to 521 (PTPP…PGGP). 2 stretches are compositionally biased toward low complexity: residues 568-581 (AQAQ…AQAP) and 591-609 (PATA…TAGP). 2 tandem repeats follow at residues 597–624 (SAGT…QPSA) and 630–658 (SQLL…TVAM). Residues 611 to 622 (PGGPAQPPPPQP) are compositionally biased toward pro residues. Disordered regions lie at residues 673–719 (QASQ…ESLP) and 968–1154 (PPQT…ADDP). Pro residues predominate over residues 678–702 (APPPPPPPPPPPPAPEQQSTPPPGS). Ser-986 and Ser-995 each carry phosphoserine. A compositionally biased stretch (low complexity) spans 1029 to 1042 (AEPWAAAVPPEWVP). The required for interaction with GET4 stretch occupies residues 1032–1062 (WAAAVPPEWVPIIQQDIQSQRKVKPQPPLSD). A Nuclear localization site motif is present at residues 1034–1076 (AAVPPEWVPIIQQDIQSQRKVKPQPPLSDAYLSGMPAKRRKTM). The sufficient for the delivery of client proteins to the endoplasmic reticulum stretch occupies residues 1044–1154 (IQQDIQSQRK…NAHRAFADDP (111 aa)). Thr-1075 is subject to Phosphothreonine. Residues 1080–1137 (GPQLLLSEAVSRAAKAAGARPLTSPESLSRDLEAPEVQESYRQQLRSDIQKRLQEDPN) form a BAG-similar domain, required and sufficient for interaction with UBL4A region. Residues 1088 to 1098 (AVSRAAKAAGA) are compositionally biased toward low complexity. Phosphoserine occurs at positions 1103 and 1139.

Component of the BAG6/BAT3 complex, also named BAT3 complex, at least composed of BAG6, UBL4A and GET4/TRC35. Interacts with GET4; the interaction is direct and localizes BAG6 in the cytosol. Interacts with UBL4A; the interaction is direct and required for UBL4A protein stability. Interacts with AIFM1. Interacts with HSPA2. Interacts with CTCFL. Interacts with p300/EP300. Interacts (via ubiquitin-like domain) with RNF126; required for BAG6-dependent ubiquitination of proteins mislocalized to the cytosol. Interacts (via ubiquitin-like domain) with SGTA; SGTA competes with RNF126 by binding the same region of BAG6, thereby promoting deubiquitination of BAG6-target proteins and rescuing them from degradation. Interacts with ricin A chain. Interacts with VCP and AMFR; both form the VCP/p97-AMFR/gp78 complex. Interacts with SYVN1. Interacts with USP13; the interaction is direct and may mediate UBL4A deubiquitination. Interacts with ZFAND2B. Interacts with KPNA2. Interacts with UBQLN4. Ricin can induce a cleavage by the caspase CASP3. The released C-terminal peptide induces apoptosis.

The protein resides in the cytoplasm. The protein localises to the cytosol. It localises to the nucleus. Its subcellular location is the secreted. It is found in the extracellular exosome. Functionally, ATP-independent molecular chaperone preventing the aggregation of misfolded and hydrophobic patches-containing proteins. Functions as part of a cytosolic protein quality control complex, the BAG6/BAT3 complex, which maintains these client proteins in a soluble state and participates in their proper delivery to the endoplasmic reticulum or alternatively can promote their sorting to the proteasome where they undergo degradation. The BAG6/BAT3 complex is involved in the post-translational delivery of tail-anchored/type II transmembrane proteins to the endoplasmic reticulum membrane. Recruited to ribosomes, it interacts with the transmembrane region of newly synthesized tail-anchored proteins and together with SGTA and ASNA1 mediates their delivery to the endoplasmic reticulum. Client proteins that cannot be properly delivered to the endoplasmic reticulum are ubiquitinated by RNF126, an E3 ubiquitin-protein ligase associated with BAG6 and are sorted to the proteasome. SGTA which prevents the recruitment of RNF126 to BAG6 may negatively regulate the ubiquitination and the proteasomal degradation of client proteins. Similarly, the BAG6/BAT3 complex also functions as a sorting platform for proteins of the secretory pathway that are mislocalized to the cytosol either delivering them to the proteasome for degradation or to the endoplasmic reticulum. The BAG6/BAT3 complex also plays a role in the endoplasmic reticulum-associated degradation (ERAD), a quality control mechanism that eliminates unwanted proteins of the endoplasmic reticulum through their retrotranslocation to the cytosol and their targeting to the proteasome. It maintains these retrotranslocated proteins in an unfolded yet soluble state condition in the cytosol to ensure their proper delivery to the proteasome. BAG6 is also required for selective ubiquitin-mediated degradation of defective nascent chain polypeptides by the proteasome. In this context, it may participate in the production of antigenic peptides and play a role in antigen presentation in immune response. BAG6 is also involved in endoplasmic reticulum stress-induced pre-emptive quality control, a mechanism that selectively attenuates the translocation of newly synthesized proteins into the endoplasmic reticulum and reroutes them to the cytosol for proteasomal degradation. BAG6 may ensure the proper degradation of these proteins and thereby protects the endoplasmic reticulum from protein overload upon stress. By inhibiting the polyubiquitination and subsequent proteasomal degradation of HSPA2 it may also play a role in the assembly of the synaptonemal complex during spermatogenesis. Also positively regulates apoptosis by interacting with and stabilizing the proapoptotic factor AIFM1. By controlling the steady-state expression of the IGF1R receptor, indirectly regulates the insulin-like growth factor receptor signaling pathway. Involved in DNA damage-induced apoptosis: following DNA damage, accumulates in the nucleus and forms a complex with p300/EP300, enhancing p300/EP300-mediated p53/TP53 acetylation leading to increase p53/TP53 transcriptional activity. When nuclear, may also act as a component of some chromatin regulator complex that regulates histone 3 'Lys-4' dimethylation (H3K4me2). Its function is as follows. Released extracellularly via exosomes, it is a ligand of the natural killer/NK cells receptor NCR3 and stimulates NK cells cytotoxicity. It may thereby trigger NK cells cytotoxicity against neighboring tumor cells and immature myeloid dendritic cells (DC). In terms of biological role, may mediate ricin-induced apoptosis. The sequence is that of Large proline-rich protein BAG6 from Mus musculus (Mouse).